A 371-amino-acid polypeptide reads, in one-letter code: Interstrand DNA cross-link repair glycosylase (371 aa).

Residues 37–39 (QAQ) carry the QXQ; important for activity motif.

This sequence belongs to the DNA glycosylase AlkZ-like family.

DNA glycosylase involved in the repair of interstrand DNA cross-links (ICLs), which are highly toxic DNA lesions that covalently tether the opposing strands of DNA, thereby inhibiting essential cellular processes such as DNA replication and transcription. Acts by unhooking both sides of the ICLs, forming abasic (AP) sites on both strands. AlkZ specifically repairs DNA damage induced by azinomycin B (AZB), a natural product with potent antibiotic and antitumor activities that interacts covalently with duplex DNA and forms ICLs. AlkZ thus confers self-resistance to azinomycin B, which is produced by S.sahachiroi. It may also protect target sites by protein-DNA interaction. Binds sequence non-specifically to native DNA and structure-specifically to azinomycin B-modified sites, with higher affinity to azinomycin B-modified sites and lower affinity to native DNA duplex. In vitro, also acts on monoadducts and can catalyze the excision of N7-methylguanine (7mGua) from an oligonucleotide containing N7-methyldeoxyguanosine (d7mG). Is a monofunctional DNA glycosylase that does not have lyase activity. This chain is Interstrand DNA cross-link repair glycosylase, found in Streptomyces sahachiroi.